The sequence spans 612 residues: Dihydroxy-acid dehydratase (612 aa).

Residue Asp81 participates in Mg(2+) binding. Cys122 serves as a coordination point for [2Fe-2S] cluster. Residues Asp123 and Lys124 each coordinate Mg(2+). Position 124 is an N6-carboxylysine (Lys124). [2Fe-2S] cluster is bound at residue Cys195. Residue Glu491 coordinates Mg(2+). Ser517 (proton acceptor) is an active-site residue.

The protein belongs to the IlvD/Edd family. As to quaternary structure, homodimer. The cofactor is [2Fe-2S] cluster. It depends on Mg(2+) as a cofactor.

It carries out the reaction (2R)-2,3-dihydroxy-3-methylbutanoate = 3-methyl-2-oxobutanoate + H2O. The enzyme catalyses (2R,3R)-2,3-dihydroxy-3-methylpentanoate = (S)-3-methyl-2-oxopentanoate + H2O. The protein operates within amino-acid biosynthesis; L-isoleucine biosynthesis; L-isoleucine from 2-oxobutanoate: step 3/4. Its pathway is amino-acid biosynthesis; L-valine biosynthesis; L-valine from pyruvate: step 3/4. Functionally, functions in the biosynthesis of branched-chain amino acids. Catalyzes the dehydration of (2R,3R)-2,3-dihydroxy-3-methylpentanoate (2,3-dihydroxy-3-methylvalerate) into 2-oxo-3-methylpentanoate (2-oxo-3-methylvalerate) and of (2R)-2,3-dihydroxy-3-methylbutanoate (2,3-dihydroxyisovalerate) into 2-oxo-3-methylbutanoate (2-oxoisovalerate), the penultimate precursor to L-isoleucine and L-valine, respectively. The polypeptide is Dihydroxy-acid dehydratase (Psychromonas ingrahamii (strain DSM 17664 / CCUG 51855 / 37)).